Here is a 477-residue protein sequence, read N- to C-terminus: Tripartite motif-containing protein 72 (477 aa).

Positions 14, 17, 29, 31, 34, 37, 53, 56, 86, 89, 97, 100, 105, 108, 114, and 117 each coordinate Zn(2+). Residues 16–59 (CQLCLELFRAPVTPECGHTFCQGCLTGVPKNQDQNGSTPCPTCQ) form an RING-type zinc finger. Residues 83 to 124 (VPQGHCLEHMDPLSVYCEQDKELICGVCASLGKHKGHNIITA) form a B box-type zinc finger. Residues 135–232 (LPQQQVILQE…QMEGVLKDVE (98 aa)) are a coiled coil. Residues 272-476 (DEFKFQVWRK…LKIFYPPAEQ (205 aa)) form the B30.2/SPRY domain.

This sequence belongs to the TRIM/RBCC family. In terms of assembly, homodimer. Homooligomer; disulfide-linked. Oligomerizes on the phospholipid membrane. Disulfide bond formation at Cys-244 occurs in case of membrane damage that cause the entry of the oxidized milieu of the extracellular space, resulting in homooligomerization.

Its subcellular location is the cell membrane. It localises to the sarcolemma. The protein localises to the cytoplasmic vesicle membrane. The enzyme catalyses S-ubiquitinyl-[E2 ubiquitin-conjugating enzyme]-L-cysteine + [acceptor protein]-L-lysine = [E2 ubiquitin-conjugating enzyme]-L-cysteine + N(6)-ubiquitinyl-[acceptor protein]-L-lysine.. The protein operates within protein modification; protein ubiquitination. With respect to regulation, specifically binds phosphatidylserine. The binding to phospholipids enhances ubiquitination activity. Its function is as follows. Muscle-specific E3 ubiquitin-protein ligase that plays a central role in cell membrane repair by nucleating the assembly of the repair machinery at injury sites. Acts as a sensor of oxidation: upon membrane damage, entry of extracellular oxidative environment results in disulfide bond formation and homooligomerization at the injury site. This oligomerization acts as a nucleation site for recruitment of TRIM72-containing vesicles to the injury site, leading to membrane patch formation. Probably acts upstream of the Ca(2+)-dependent membrane resealing process. Required for transport of DYSF to sites of cell injury during repair patch formation. Regulates membrane budding and exocytosis. May be involved in the regulation of the mobility of KCNB1-containing endocytic vesicles. This is Tripartite motif-containing protein 72 (trim72) from Xenopus laevis (African clawed frog).